Here is a 489-residue protein sequence, read N- to C-terminus: MTFRHCVAVDLGASSGRVMLARYDSKHRTLTLREIHRFVNCLQKTDGFDTWDIDSLEKDIRLGLKKVCNEGILIDSIGIDTWGVDYVLLDKQGQRVGLPVSYRDNRTTGIMPQALVQIGKSEIYRRSGIQFLPFNTIYQLRALTKQQPELTAQVAHALLMPDYFSYRLTGEMNWEYTNATTTQLVNINTDDWDDTLLAWTGAKKSWFGRPSHPGNVIGDWICPQGNRIPVVAVASHDTASAVIASPLANKHSAYLSSGTWSLMGFESKKPYTTDEALAANITNEGGAEGRYRVLKNIMGLWLLQRVLKERRITDLPALIAQTEALPACRFLINPNDDRFINPDDMHAEIQAACRETDQPVPVSDAELARCIFDSLALLYADILHELANLRGEKFTQLHIVGGGCQNALLNQLCADACGIRVMAGPVEASTLGNIGIQLMTLDELNNVDDFRQVVSANYDLTTYIPNPDSEIARHVAQFQPKRQTKELCA.

13 to 17 (ASSGR) lines the ATP pocket. Cysteine 68 and cysteine 222 are disulfide-bonded. Residues glycine 83 and 236–238 (HDT) each bind substrate. Aspartate 237 acts as the Proton acceptor in catalysis. ATP is bound at residue threonine 259. Substrate is bound at residue asparagine 296. Residue glutamine 304 coordinates ATP. A disulfide bond links cysteine 353 and cysteine 370. Glycine 402 is an ATP binding site. A disulfide bridge connects residues cysteine 413 and cysteine 417.

Belongs to the rhamnulokinase family. Mg(2+) serves as cofactor.

The catalysed reaction is L-rhamnulose + ATP = L-rhamnulose 1-phosphate + ADP + H(+). It functions in the pathway carbohydrate degradation; L-rhamnose degradation; glycerone phosphate from L-rhamnose: step 2/3. Functionally, involved in the catabolism of L-rhamnose (6-deoxy-L-mannose). Catalyzes the transfer of the gamma-phosphate group from ATP to the 1-hydroxyl group of L-rhamnulose to yield L-rhamnulose 1-phosphate. The protein is Rhamnulokinase of Salmonella heidelberg (strain SL476).